The primary structure comprises 463 residues: Glutamate--tRNA ligase 2 (463 aa).

The 'HIGH' region signature appears at 10–20 (PSPTGFLHIGS). The 'KMSKS' region signature appears at 239–243 (KLSKR). K242 contacts ATP.

This sequence belongs to the class-I aminoacyl-tRNA synthetase family. Glutamate--tRNA ligase type 1 subfamily. As to quaternary structure, monomer.

The protein resides in the cytoplasm. The enzyme catalyses tRNA(Glu) + L-glutamate + ATP = L-glutamyl-tRNA(Glu) + AMP + diphosphate. Catalyzes the attachment of glutamate to tRNA(Glu) in a two-step reaction: glutamate is first activated by ATP to form Glu-AMP and then transferred to the acceptor end of tRNA(Glu). The protein is Glutamate--tRNA ligase 2 of Rickettsia felis (strain ATCC VR-1525 / URRWXCal2) (Rickettsia azadi).